Consider the following 249-residue polypeptide: Isoprenyl transferase (249 aa).

Aspartate 25 is an active-site residue. Residue aspartate 25 participates in Mg(2+) binding. Substrate-binding positions include 26 to 29, tryptophan 30, arginine 38, histidine 42, and 70 to 72; these read GNGR and STE. The Proton acceptor role is filled by asparagine 73. Substrate is bound by residues tryptophan 74, arginine 76, arginine 197, and 203 to 205; that span reads RLS. Residue glutamate 216 coordinates Mg(2+).

This sequence belongs to the UPP synthase family. In terms of assembly, homodimer. It depends on Mg(2+) as a cofactor.

In terms of biological role, catalyzes the condensation of isopentenyl diphosphate (IPP) with allylic pyrophosphates generating different type of terpenoids. This chain is Isoprenyl transferase, found in Streptococcus mutans serotype c (strain ATCC 700610 / UA159).